The following is a 105-amino-acid chain: Large ribosomal subunit protein P1 (105 aa).

Methionine 1 carries the blocked amino end (Met) modification. Over residues 65–76 (VAAPAGQQTQQA) the composition is skewed to low complexity. The interval 65–105 (VAAPAGQQTQQAAEKKEEKKEEEKKGPSEEEIGGGLSSLFG) is disordered. Over residues 77–92 (AEKKEEKKEEEKKGPS) the composition is skewed to basic and acidic residues.

Belongs to the eukaryotic ribosomal protein P1/P2 family. As to quaternary structure, part of the 50S ribosomal subunit. Homodimer, it forms part of the ribosomal stalk which helps the ribosome interact with GTP-bound translation factors. Forms a heptameric uL10/P0(P1)2(P1)2(P1)2 complex, where uL10/P0 forms an elongated spine to which the P1 dimers bind in a sequential fashion.

Functionally, forms part of the ribosomal stalk, playing a central role in the interaction of the ribosome with GTP-bound translation factors. In Sulfolobus acidocaldarius (strain ATCC 33909 / DSM 639 / JCM 8929 / NBRC 15157 / NCIMB 11770), this protein is Large ribosomal subunit protein P1.